The sequence spans 262 residues: Virulence plasmid protein pGP6-D-related protein (262 aa).

The protein belongs to the UPF0137 (pGP6-D) family.

The sequence is that of Virulence plasmid protein pGP6-D-related protein from Chlamydia muridarum (strain MoPn / Nigg).